Here is a 213-residue protein sequence, read N- to C-terminus: Orotate phosphoribosyltransferase (213 aa).

Lys-26 lines the 5-phospho-alpha-D-ribose 1-diphosphate pocket. Residue 34-35 (FF) coordinates orotate. 5-phospho-alpha-D-ribose 1-diphosphate is bound by residues 72-73 (YK), Arg-99, Lys-100, Lys-103, His-105, and 124-132 (DDVITAGTA). The orotate site is built by Thr-128 and Arg-156.

It belongs to the purine/pyrimidine phosphoribosyltransferase family. PyrE subfamily. As to quaternary structure, homodimer. Mg(2+) serves as cofactor.

The catalysed reaction is orotidine 5'-phosphate + diphosphate = orotate + 5-phospho-alpha-D-ribose 1-diphosphate. Its pathway is pyrimidine metabolism; UMP biosynthesis via de novo pathway; UMP from orotate: step 1/2. In terms of biological role, catalyzes the transfer of a ribosyl phosphate group from 5-phosphoribose 1-diphosphate to orotate, leading to the formation of orotidine monophosphate (OMP). The protein is Orotate phosphoribosyltransferase of Salmonella agona (strain SL483).